The chain runs to 208 residues: Uracil phosphoribosyltransferase (208 aa).

Residues Arg-78, Arg-103, and 130–138 (DPMLATGGS) contribute to the 5-phospho-alpha-D-ribose 1-diphosphate site. Residues Ile-193 and 198–200 (GDA) contribute to the uracil site. Asp-199 serves as a coordination point for 5-phospho-alpha-D-ribose 1-diphosphate.

It belongs to the UPRTase family. Mg(2+) serves as cofactor.

The catalysed reaction is UMP + diphosphate = 5-phospho-alpha-D-ribose 1-diphosphate + uracil. It participates in pyrimidine metabolism; UMP biosynthesis via salvage pathway; UMP from uracil: step 1/1. With respect to regulation, allosterically activated by GTP. Catalyzes the conversion of uracil and 5-phospho-alpha-D-ribose 1-diphosphate (PRPP) to UMP and diphosphate. The sequence is that of Uracil phosphoribosyltransferase from Salmonella agona (strain SL483).